The chain runs to 148 residues: Extracellular globin-2B (148 aa).

Residues 3–148 enclose the Globin domain; that stretch reads CCSAADRHEV…IADVIKAELP (146 aa). Cysteine 4 and cysteine 135 are oxidised to a cystine. Heme b is bound at residue histidine 98.

It belongs to the globin family. Disulfide bonded trimer of chains IIA, IIB, and IIC.

Its subcellular location is the secreted. The chain is Extracellular globin-2B from Tylorrhynchus heterochetus (Japanese palolo worm).